Reading from the N-terminus, the 246-residue chain is Orotidine 5'-phosphate decarboxylase (246 aa).

Substrate-binding positions include aspartate 22, lysine 44, 71-80, threonine 130, arginine 191, glutamine 201, glycine 221, and arginine 222; that span reads DLKYHDIPHT. The Proton donor role is filled by lysine 73.

The protein belongs to the OMP decarboxylase family. Type 1 subfamily. As to quaternary structure, homodimer.

The catalysed reaction is orotidine 5'-phosphate + H(+) = UMP + CO2. It functions in the pathway pyrimidine metabolism; UMP biosynthesis via de novo pathway; UMP from orotate: step 2/2. Functionally, catalyzes the decarboxylation of orotidine 5'-monophosphate (OMP) to uridine 5'-monophosphate (UMP). The protein is Orotidine 5'-phosphate decarboxylase of Neisseria meningitidis serogroup C (strain 053442).